Reading from the N-terminus, the 139-residue chain is Crossover junction endodeoxyribonuclease Hje (139 aa).

Mg(2+)-binding residues include Glu-10, Asp-39, and Glu-52.

This sequence belongs to the Holliday junction resolvase Hjc family. Hje subfamily. Homodimer. Mg(2+) is required as a cofactor.

It catalyses the reaction Endonucleolytic cleavage at a junction such as a reciprocal single-stranded crossover between two homologous DNA duplexes (Holliday junction).. In terms of biological role, a structure-specific endonuclease that resolves Holliday junction (HJ) intermediates during genetic recombination. Acts only on 4-way DNA junctions in a sequence non-specific manner; introduces paired nicks in opposing strands 2 bases 3' of the point of strand exchange only on continuous strands of 4-way junction DNA. Cleaves both mobile and immobile junctions. Redundant function with Holliday junction resolvase Hjc. This is Crossover junction endodeoxyribonuclease Hje from Sulfolobus acidocaldarius (strain ATCC 33909 / DSM 639 / JCM 8929 / NBRC 15157 / NCIMB 11770).